Reading from the N-terminus, the 149-residue chain is UPF0208 membrane protein PBPRA2797 (149 aa).

A run of 2 helical transmembrane segments spans residues 41 to 60 and 65 to 87; these read FATR…QMAF and ALPQ…LWWL.

Belongs to the UPF0208 family.

It localises to the cell inner membrane. This chain is UPF0208 membrane protein PBPRA2797, found in Photobacterium profundum (strain SS9).